The following is a 467-amino-acid chain: Glycosyl hydrolase family 109 protein (467 aa).

Positions M1–A31 form a signal peptide, tat-type signal. NAD(+)-binding positions include Q66–R67, D88, W137–H140, E157–V158, and N186. Residues Y215, R234, Y246–H249, and Y328 each bind substrate. Y246 contacts NAD(+).

The protein belongs to the Gfo/Idh/MocA family. Glycosyl hydrolase 109 subfamily. Requires NAD(+) as cofactor. Post-translationally, predicted to be exported by the Tat system. The position of the signal peptide cleavage has not been experimentally proven.

Its function is as follows. Glycosidase. This is Glycosyl hydrolase family 109 protein from Shewanella woodyi (strain ATCC 51908 / MS32).